We begin with the raw amino-acid sequence, 245 residues long: UDP-2,3-diacylglucosamine hydrolase (245 aa).

Mn(2+) contacts are provided by aspartate 8, histidine 10, aspartate 41, asparagine 79, and histidine 114. Position 79–80 (79–80 (NR)) interacts with substrate. Aspartate 122, serine 160, lysine 164, lysine 167, and histidine 195 together coordinate substrate. Positions 195 and 197 each coordinate Mn(2+).

The protein belongs to the LpxH family. Mn(2+) serves as cofactor.

It is found in the cell inner membrane. The catalysed reaction is UDP-2-N,3-O-bis[(3R)-3-hydroxytetradecanoyl]-alpha-D-glucosamine + H2O = 2-N,3-O-bis[(3R)-3-hydroxytetradecanoyl]-alpha-D-glucosaminyl 1-phosphate + UMP + 2 H(+). Its pathway is glycolipid biosynthesis; lipid IV(A) biosynthesis; lipid IV(A) from (3R)-3-hydroxytetradecanoyl-[acyl-carrier-protein] and UDP-N-acetyl-alpha-D-glucosamine: step 4/6. Functionally, hydrolyzes the pyrophosphate bond of UDP-2,3-diacylglucosamine to yield 2,3-diacylglucosamine 1-phosphate (lipid X) and UMP by catalyzing the attack of water at the alpha-P atom. Involved in the biosynthesis of lipid A, a phosphorylated glycolipid that anchors the lipopolysaccharide to the outer membrane of the cell. The sequence is that of UDP-2,3-diacylglucosamine hydrolase from Aromatoleum aromaticum (strain DSM 19018 / LMG 30748 / EbN1) (Azoarcus sp. (strain EbN1)).